The following is a 655-amino-acid chain: p-hydroxybenzoic acid efflux pump subunit AaeB (655 aa).

The Periplasmic portion of the chain corresponds to 1-12; the sequence is MGIFSIANQHIR. Residues 13 to 33 form a helical membrane-spanning segment; sequence FAVKLACAIVLALFIGFHFQL. Residues 34-37 are Cytoplasmic-facing; sequence ETPR. Residues 38 to 58 traverse the membrane as a helical segment; sequence WAVLTAAIVAAGPAFAAGGEP. Topologically, residues 59–68 are periplasmic; it reads YSGAIRYRGM. The helical transmembrane segment at 69-89 threads the bilayer; that stretch reads LRIIGTFIGCIAALIIIISMI. Residues 90 to 92 lie on the Cytoplasmic side of the membrane; that stretch reads RAP. A helical transmembrane segment spans residues 93–113; it reads LLMILVCCVWAGFCTWISSLV. Over 114 to 120 the chain is Periplasmic; it reads RIENSYA. The helical transmembrane segment at 121–141 threads the bilayer; it reads WGLSGYTALIIVITIQTEPLL. The Cytoplasmic portion of the chain corresponds to 142–151; the sequence is TPQFALERCS. A helical membrane pass occupies residues 152-172; it reads EIVIGIGCAILADLLFSPRSI. Residues 173–369 are Periplasmic-facing; the sequence is KQEVDRELDC…RTTLSCILGT (197 aa). The helical transmembrane segment at 370 to 390 threads the bilayer; that stretch reads LFWLWTGWTSGNGAMVMIAVV. The Cytoplasmic segment spans residues 391–406; that stretch reads TSLAMRLPNPRMVCID. The helical transmembrane segment at 407-427 threads the bilayer; that stretch reads FIYGTLAALPLGLLYFLVIIP. At 428 to 430 the chain is on the periplasmic side; sequence NTQ. A helical membrane pass occupies residues 431 to 451; it reads QSMLLLCLSLAVLGFFIGIEV. At 452–459 the chain is on the cytoplasmic side; sequence QKRRLGSM. Residues 460-480 form a helical membrane-spanning segment; it reads GALASTINIIVLDNPMTFHFI. Position 481 (Q481) is a topological domain, periplasmic. The chain crosses the membrane as a helical span at residues 482–502; it reads FLDSALGQIVGCMLAFIVILL. Topologically, residues 503 to 655 are cytoplasmic; that stretch reads VRDKSKDRTG…HKYQNALTDS (153 aa).

This sequence belongs to the aromatic acid exporter ArAE (TC 2.A.85) family.

The protein localises to the cell inner membrane. Functionally, forms an efflux pump with AaeA. Could function as a metabolic relief valve, allowing to eliminate certain compounds when they accumulate to high levels in the cell. The sequence is that of p-hydroxybenzoic acid efflux pump subunit AaeB from Salmonella typhi.